The following is a 322-amino-acid chain: Phospholipase A1 (322 aa).

The signal sequence occupies residues 1 to 18 (MNFKYSILFICFGTLDRG). Cys-23 and Cys-106 are disulfide-bonded. The active-site Nucleophile is the Ser-156. Residue Asp-184 is the Charge relay system of the active site. 2 disulfide bridges follow: Cys-195–Cys-200 and Cys-238–Cys-246. Residue His-248 is the Charge relay system of the active site. 3 disulfide bridges follow: Cys-263/Cys-290, Cys-264/Cys-315, and Cys-283/Cys-288.

This sequence belongs to the AB hydrolase superfamily. Lipase family. Contains six disulfide bonds. Post-translationally, is not glycosylated. In terms of tissue distribution, expressed by the venom gland.

Its subcellular location is the secreted. It carries out the reaction a 1,2-diacyl-sn-glycero-3-phosphocholine + H2O = a 2-acyl-sn-glycero-3-phosphocholine + a fatty acid + H(+). Its function is as follows. Catalyzes the hydrolysis of phosphatidylcholine with phospholipase A1 activity. Shows hemolytic activity. Acts as an allergen. This chain is Phospholipase A1, found in Polybia paulista (Neotropical social wasp).